A 219-amino-acid polypeptide reads, in one-letter code: Transmembrane emp24 domain-containing protein 10 (219 aa).

The N-terminal stretch at 1 to 31 (MSGLSGPPARRGPFPLALLLLFLLGPRLVLA) is a signal peptide. The required for interaction with STX17 stretch occupies residues 1 to 142 (MSGLSGPPAR…KNYEEIAKVE (142 aa)). The Lumenal portion of the chain corresponds to 32–185 (ISFHLPINSR…RDTNESTNTR (154 aa)). The GOLD domain occupies 41-193 (RKCLREEIHK…TRVLYFSIFS (153 aa)). The tract at residues 147 to 178 (LEVELRRLEDLSESIVNDFAYMKKREEEMRDT) is required for TMED10 and TMED2 cis-Golgi network localization. 2 positions are modified to dimethylated arginine: Arg-171 and Arg-176. Residue Asn-179 is glycosylated (N-linked (GlcNAc...) asparagine). Residues 186 to 206 (VLYFSIFSMFCLIGLATWQVF) form a helical membrane-spanning segment. The tract at residues 204–219 (QVFYLRRFFKAKKLIE) is interaction with COPG1. Topologically, residues 207–219 (YLRRFFKAKKLIE) are cytoplasmic. The segment at 207 to 219 (YLRRFFKAKKLIE) is interaction with ARF1 and IL1B. Positions 211–212 (FF) match the COPII vesicle coat-binding motif. The COPI vesicle coat-binding signature appears at 211 to 219 (FFKAKKLIE).

Belongs to the EMP24/GP25L family. As to quaternary structure, predominantly dimeric and to a lesser extent monomeric in the ER. Monomer and dimer in ERGIC and cis-Golgi network. Forms homooligomer (via GOLD domain); the assembly is promoted by direct binding with leaderless cargos and may form a protein channel that facilitates cargo entry into the ERGIC. Forms heterooligomeric complexes with other members of the p24 family such as TMED2, TMED7 and TMED9. Interacts (via GOLD domain) with TMED2 (via GOLD domain); the complex is required for export of TMED10 from the ER to the cis-Golgi network; the complex is proposed to be involved in cis-Golgi network dynamics and / or biogenesis. Associates with the COPI vesicle coat subunits (coatomer). Tetramerization of the cytoplasmic domain at the Golgi membrane in vitro; the complex is proposed to interact with COPI coatomer and induce budding of the vesicles. Interacts with COPG1; the interaction involves TMED10 homodimer. Interacts with ARF1 (GDP-bound); the interaction probably involves a TMED10 oligomer. Interacts with SEC23A, SEC24B, SEC24C and SEC24D components of the coat protein complex II/COPII, indicative of an association of TMED10 with the COPII vesicle coat. Interacts with CD59. Interacts with MPPE1/PGAP5; the complex might recruit and sort GPI-anchored proteins to the ER-exit site, or the interaction might lead to recycling of PGAP5 between the ER and the Golgi. Interacts with F2LR1/PAR2. Interacts with KDELR2/ERD2; the interaction is disrupted by KDELR2 ligand. Found in a complex composed at least of SURF4, TMED2 and TMED10. Associates with the presenilin-dependent gamma-secretase complex. Interacts with STX17; the interaction is direct. Interacts with IL-1; the interaction is direct. Interacts with RAB21 (active GTP-bound form); the interaction is indirect and regulates TMED10 abundance and localization at the Golgi.

The protein localises to the endoplasmic reticulum membrane. Its subcellular location is the endoplasmic reticulum-Golgi intermediate compartment membrane. The protein resides in the golgi apparatus membrane. It localises to the golgi apparatus. It is found in the cis-Golgi network membrane. The protein localises to the trans-Golgi network membrane. Its subcellular location is the cytoplasmic vesicle. The protein resides in the secretory vesicle membrane. It localises to the cell membrane. It is found in the melanosome. Its function is as follows. Cargo receptor involved in protein vesicular trafficking and quality control in the endoplasmic reticulum (ER) and Golgi. The p24 protein family is a group of transmembrane proteins that bind coat protein complex I/COPI and coat protein complex II/COPII involved in vesicular trafficking between the membranes. Acts at the lumenal side for incorporation of secretory cargo molecules into transport vesicles and involved in vesicle coat formation at the cytoplasmic side. Mainly functions in the early secretory pathway and cycles between the ER, ER-Golgi intermediate compartment (ERGIC) and Golgi, mediating cargo transport through COPI and COPII-coated vesicles. In COPII vesicle-mediated anterograde transport, involved in the transport of GPI-anchored proteins by acting together with TMED2 as their cargo receptor; the function specifically implies SEC24C and SEC24D of the COPII vesicle coat and lipid raft-like microdomains of the ER. Recognizes GPI anchors structural remodeled in the ER by the GPI inositol-deacylase/PGAP1 and the metallophosphoesterase MPPE1/PGAP5. In COPI vesicle-mediated retrograde transport, involved in the biogenesis of COPI vesicles and vesicle coat recruitment. Involved in trafficking of amyloid beta A4 protein and soluble APP-beta release (independent from the modulation of gamma-secretase activity). Involved in the KDELR2-mediated retrograde transport of the toxin A subunit (CTX-A-K63)together with COPI and the COOH terminus of KDELR2. On Golgi membranes, acts as a primary receptor for ARF1-GDP, a GTP-binding protein involved in COPI-vesicle formation. Increases coatomer-dependent GTPase-activating activity of ARFGAP2 which mediates the hydrolysis of ARF1-bound GTP and therefore modulates protein trafficking from the Golgi apparatus. Involved in the exocytic trafficking of G protein-coupled receptors F2LR1/PAR2 (trypsin and tryspin-like enzyme receptor), OPRM1 (opioid receptor) and P2RY4 (UTD and UDP receptor) from the Golgi to the plasma membrane, thus contributing to receptor resensitization. In addition to its cargo receptor activity, may also act as a protein channel after oligomerization, facilitating the post-translational entry of leaderless cytoplasmic cargo into the ERGIC. Involved in the translocation into ERGIC, the vesicle entry and the secretion of leaderless cargos (lacking the secretion signal sequence), including the mature form of interleukin 1/IL-1 family members, the alpha-crystallin B chain HSPB5, the carbohydrate-binding proteins galectin-1/LGALS1 and galectin-3/LGALS3, the microtubule-associated protein Tau/MAPT, and the annexin A1/ANXA1; the translocation process is dependent on cargo protein unfolding and enhanced by chaperones HSP90AB1 and HSP90B1/GRP9. Could also associates with the presenilin-dependent gamma-secretase complex in order to regulate gamma-cleavages of the amyloid beta A4 protein to yield amyloid-beta 40/Abeta40. This chain is Transmembrane emp24 domain-containing protein 10, found in Homo sapiens (Human).